The sequence spans 258 residues: Deoxyribose-phosphate aldolase (258 aa).

D102 serves as the catalytic Proton donor/acceptor. Catalysis depends on K165, which acts as the Schiff-base intermediate with acetaldehyde. K199 functions as the Proton donor/acceptor in the catalytic mechanism.

This sequence belongs to the DeoC/FbaB aldolase family. DeoC type 2 subfamily.

The protein localises to the cytoplasm. It catalyses the reaction 2-deoxy-D-ribose 5-phosphate = D-glyceraldehyde 3-phosphate + acetaldehyde. It functions in the pathway carbohydrate degradation; 2-deoxy-D-ribose 1-phosphate degradation; D-glyceraldehyde 3-phosphate and acetaldehyde from 2-deoxy-alpha-D-ribose 1-phosphate: step 2/2. Catalyzes a reversible aldol reaction between acetaldehyde and D-glyceraldehyde 3-phosphate to generate 2-deoxy-D-ribose 5-phosphate. The chain is Deoxyribose-phosphate aldolase from Aliivibrio fischeri (strain MJ11) (Vibrio fischeri).